The chain runs to 266 residues: Thymidylate synthase (266 aa).

DUMP is bound at residue Arg-24. His-54 is a (6R)-5,10-methylene-5,6,7,8-tetrahydrofolate binding site. 129 to 130 (RR) is a dUMP binding site. Cys-149 functions as the Nucleophile in the catalytic mechanism. DUMP contacts are provided by residues 169 to 172 (RSAD), Asn-180, and 210 to 212 (HIY). (6R)-5,10-methylene-5,6,7,8-tetrahydrofolate is bound at residue Asp-172. A (6R)-5,10-methylene-5,6,7,8-tetrahydrofolate-binding site is contributed by Ala-265.

This sequence belongs to the thymidylate synthase family. Bacterial-type ThyA subfamily. Homodimer.

It localises to the cytoplasm. It carries out the reaction dUMP + (6R)-5,10-methylene-5,6,7,8-tetrahydrofolate = 7,8-dihydrofolate + dTMP. It participates in pyrimidine metabolism; dTTP biosynthesis. In terms of biological role, catalyzes the reductive methylation of 2'-deoxyuridine-5'-monophosphate (dUMP) to 2'-deoxythymidine-5'-monophosphate (dTMP) while utilizing 5,10-methylenetetrahydrofolate (mTHF) as the methyl donor and reductant in the reaction, yielding dihydrofolate (DHF) as a by-product. This enzymatic reaction provides an intracellular de novo source of dTMP, an essential precursor for DNA biosynthesis. This is Thymidylate synthase from Corynebacterium glutamicum (strain R).